The chain runs to 214 residues: Large ribosomal subunit protein uL3 (214 aa).

Gln-151 bears the N5-methylglutamine mark.

The protein belongs to the universal ribosomal protein uL3 family. Part of the 50S ribosomal subunit. Forms a cluster with proteins L14 and L19. Methylated by PrmB.

Its function is as follows. One of the primary rRNA binding proteins, it binds directly near the 3'-end of the 23S rRNA, where it nucleates assembly of the 50S subunit. The protein is Large ribosomal subunit protein uL3 of Saccharophagus degradans (strain 2-40 / ATCC 43961 / DSM 17024).